Reading from the N-terminus, the 219-residue chain is LexA repressor (219 aa).

The segment at residues 28-48 (RAEIAAELGFRSANAAEEHLQ) is a DNA-binding region (H-T-H motif). Catalysis depends on for autocatalytic cleavage activity residues Ser138 and Lys175.

It belongs to the peptidase S24 family. Homodimer.

The enzyme catalyses Hydrolysis of Ala-|-Gly bond in repressor LexA.. Represses a number of genes involved in the response to DNA damage (SOS response), including recA and lexA. In the presence of single-stranded DNA, RecA interacts with LexA causing an autocatalytic cleavage which disrupts the DNA-binding part of LexA, leading to derepression of the SOS regulon and eventually DNA repair. The sequence is that of LexA repressor from Herminiimonas arsenicoxydans.